The sequence spans 2197 residues: Protein sickie (2197 aa).

The 109-residue stretch at 21–129 folds into the Calponin-homology (CH) domain; it reads RDYAEIYTDW…LFFALSRFKQ (109 aa). Disordered regions lie at residues 165–197, 235–311, 331–646, 730–767, 788–910, 1094–1119, and 1202–1223; these read GLRT…QLAQ, CPPD…PQKH, AASV…NKFH, GSSP…SPGK, RNSR…FGYV, GPGQ…NRSN, and TAAG…GLVG. A compositionally biased stretch (low complexity) spans 175–197; the sequence is QDKNQQEQQQQQQQQQTPQQLAQ. The span at 261–290 shows a compositional bias: polar residues; that stretch reads SDFNTSRPNSPPTSNHTIQSLKSGNNNSLR. The segment covering 291-304 has biased composition (low complexity); that stretch reads PPSIKSGIPSPSSP. The segment covering 331-341 has biased composition (polar residues); it reads AASVASKTQIQ. 2 stretches are compositionally biased toward low complexity: residues 342–354 and 379–398; these read SKRT…FSSA and SVSS…LAAQ. Residues 399 to 428 are compositionally biased toward basic and acidic residues; it reads QKKEQANKATKLDKKEKSPARSLNKEESGN. 4 stretches are compositionally biased toward polar residues: residues 429 to 441, 561 to 570, 577 to 588, and 633 to 644; these read ESRS…TGKS, ANSQPTSHIS, EPSTPQHSSGIY, and SAPNTPTASPNK. Low complexity-rich tracts occupy residues 755–766, 796–831, and 887–904; these read GPSSSAGGISPG, SIGT…NNNN, and SSSK…KGVP. The segment covering 1100–1119 has biased composition (polar residues); that stretch reads GQMSGNESPYVQSPRMNRSN. Positions 1262-1342 form a coiled coil; the sequence is YGNAEERQAH…RQTIELLRKQ (81 aa). Disordered stretches follow at residues 1373–1415 and 1455–1511; these read QALG…SMCS and KTSR…SPAK. 2 stretches are compositionally biased toward polar residues: residues 1379–1399 and 1406–1415; these read GSDQ…NNGS and RQHSTDSMCS. A compositionally biased stretch (basic residues) spans 1455–1468; sequence KTSRHVGHHHHHNH. Residues 1556–1591 are a coiled coil; sequence SSASQLESLKEMMNKMRAEMMSLKHNNERLQKLVTT. Disordered stretches follow at residues 1600–1633, 1648–1690, and 2172–2197; these read SLGQ…PPME, CLPP…EAAP, and SEAQ…AGAE. A compositionally biased stretch (polar residues) spans 1603-1616; it reads QAISPNGSVAGSSE. A compositionally biased stretch (pro residues) spans 1650–1663; that stretch reads PPAPAPEQPPPPAP. A compositionally biased stretch (polar residues) spans 2184-2197; it reads LDSNVTPESSAGAE.

It belongs to the Nav/unc-53 family.

Its function is as follows. Required for the immune deficiency pathway, which mediates responses to Gram-negative bacterial infection. Favors Rel activation and nuclear translocation. The chain is Protein sickie (sick) from Drosophila melanogaster (Fruit fly).